The following is a 782-amino-acid chain: Protein PAT1 homolog 1 (782 aa).

Disordered stretches follow at residues 96 to 153 (GPKH…HSKP), 177 to 217 (LPES…YSAP), 332 to 372 (VREH…SKHM), and 460 to 481 (EVDS…GKHL). Low complexity predominate over residues 108–117 (SGSFSRESSS). Residues 208 to 217 (GGSQLTYSAP) show a composition bias toward polar residues. Positions 335 to 347 (HKHKSSHRSRKNR) are enriched in basic residues. A compositionally biased stretch (polar residues) spans 348–366 (GLSQQTSDAASQKSETGLQ). Residues 471–481 (SGDHKGSGKHL) are compositionally biased toward basic and acidic residues.

In terms of assembly, interacts with AFPH2/NINJA. Expressed in root vasculature, shoot apical meristem (SAM) and leaves.

In terms of biological role, activator of mRNA decapping. Involved in mRNA decay via decapping. Involved in the regulation of root stem cell niche identity. Maintains root stem cell niche stability through the interaction with the negative regulator of jasmonate signaling AFPH2/NINJA, and the regulation of cell division. This is Protein PAT1 homolog 1 from Arabidopsis thaliana (Mouse-ear cress).